We begin with the raw amino-acid sequence, 240 residues long: Phosphoribosyl isomerase A (240 aa).

The Proton acceptor role is filled by Asp11. The active-site Proton donor is Asp130.

Belongs to the HisA/HisF family. Monomer.

Its subcellular location is the cytoplasm. The enzyme catalyses 1-(5-phospho-beta-D-ribosyl)-5-[(5-phospho-beta-D-ribosylamino)methylideneamino]imidazole-4-carboxamide = 5-[(5-phospho-1-deoxy-D-ribulos-1-ylimino)methylamino]-1-(5-phospho-beta-D-ribosyl)imidazole-4-carboxamide. It catalyses the reaction N-(5-phospho-beta-D-ribosyl)anthranilate = 1-(2-carboxyphenylamino)-1-deoxy-D-ribulose 5-phosphate. It functions in the pathway amino-acid biosynthesis; L-histidine biosynthesis; L-histidine from 5-phospho-alpha-D-ribose 1-diphosphate: step 4/9. It participates in amino-acid biosynthesis; L-tryptophan biosynthesis; L-tryptophan from chorismate: step 3/5. Functionally, catalyzes the isomerization of the aminoaldose moiety of ProFAR to the aminoketose of PRFAR in the biosynthesis pathway for histidine and the isomerization of the aminoaldose PRA to the aminoketose CdRP in the biosynthsis pathway for tryptophan. This Streptomyces coelicolor (strain ATCC BAA-471 / A3(2) / M145) protein is Phosphoribosyl isomerase A (priA).